The primary structure comprises 361 residues: Adenosine kinase (361 aa).

The Nuclear localization signal signature appears at 7-15 (PKPKKLKVE). Residue aspartate 34 participates in adenosine binding. Serine 48 contributes to the Mg(2+) binding site. Tyrosine 76 is modified (phosphotyrosine). Residues aspartate 146 and asparagine 147 each coordinate Mg(2+). Position 305 (glutamine 305) interacts with adenosine. Residue aspartate 316 is part of the active site. Catalysis depends on aspartate 316, which acts as the Proton acceptor.

Belongs to the carbohydrate kinase PfkB family. Monomer. It depends on Mg(2+) as a cofactor. The N-terminus is blocked.

Its subcellular location is the nucleus. The catalysed reaction is adenosine + ATP = AMP + ADP + H(+). Its pathway is purine metabolism; AMP biosynthesis via salvage pathway; AMP from adenosine: step 1/1. With respect to regulation, activity is inhibited by 5-iodotubercidin and 5'-amino-5'-deoxyadenosine. In terms of biological role, catalyzes the phosphorylation of the purine nucleoside adenosine at the 5' position in an ATP-dependent manner. Serves as a potential regulator of concentrations of extracellular adenosine and intracellular adenine nucleotides. The polypeptide is Adenosine kinase (ADK) (Cricetulus griseus (Chinese hamster)).